We begin with the raw amino-acid sequence, 536 residues long: Inactive beta-amylase 9 (536 aa).

S47 bears the Phosphoserine mark. The disordered stretch occupies residues 511–536 (QASEAEVEAETASIGSGTGAPSLQTA).

The protein belongs to the glycosyl hydrolase 14 family. In terms of tissue distribution, mostly expressed in young floral buds, flowers and roots, and, to a later extent, in stems and leaves.

It localises to the cytoplasm. The polypeptide is Inactive beta-amylase 9 (BAM9) (Arabidopsis thaliana (Mouse-ear cress)).